A 231-amino-acid polypeptide reads, in one-letter code: ATP phosphoribosyltransferase (231 aa).

Belongs to the ATP phosphoribosyltransferase family. Short subfamily. Heteromultimer composed of HisG and HisZ subunits.

It is found in the cytoplasm. The catalysed reaction is 1-(5-phospho-beta-D-ribosyl)-ATP + diphosphate = 5-phospho-alpha-D-ribose 1-diphosphate + ATP. It participates in amino-acid biosynthesis; L-histidine biosynthesis; L-histidine from 5-phospho-alpha-D-ribose 1-diphosphate: step 1/9. Catalyzes the condensation of ATP and 5-phosphoribose 1-diphosphate to form N'-(5'-phosphoribosyl)-ATP (PR-ATP). Has a crucial role in the pathway because the rate of histidine biosynthesis seems to be controlled primarily by regulation of HisG enzymatic activity. The sequence is that of ATP phosphoribosyltransferase from Psychrobacter arcticus (strain DSM 17307 / VKM B-2377 / 273-4).